Consider the following 290-residue polypeptide: 33 kDa chaperonin (290 aa).

Cystine bridges form between Cys235/Cys237 and Cys268/Cys271.

It belongs to the HSP33 family. Post-translationally, under oxidizing conditions two disulfide bonds are formed involving the reactive cysteines. Under reducing conditions zinc is bound to the reactive cysteines and the protein is inactive.

The protein localises to the cytoplasm. Its function is as follows. Redox regulated molecular chaperone. Protects both thermally unfolding and oxidatively damaged proteins from irreversible aggregation. Plays an important role in the bacterial defense system toward oxidative stress. This chain is 33 kDa chaperonin, found in Streptococcus pneumoniae serotype 19F (strain G54).